The following is a 717-amino-acid chain: F-box only protein 42 (717 aa).

Residues 1–30 show a composition bias toward acidic residues; that stretch reads MASSSDSEDDSVMAVDQEETALEGTMEQDE. A disordered region spans residues 1-34; sequence MASSSDSEDDSVMAVDQEETALEGTMEQDEDPHP. An F-box domain is found at 44–93; sequence NRSMSELPEEVLEYILSFLSPYQEHKTAALVCKQWYRLIKGVAHQCYHGF. Kelch repeat units follow at residues 132-184, 186-242, 244-293, and 295-342; these read SMYV…VYKD, LVLF…VIGD, MIVF…VIDD, and TLLI…LWCH. A disordered region spans residues 361–452; it reads RAPLSPSLNS…NLSPGTVAVG (92 aa). Positions 363–376 are enriched in low complexity; that stretch reads PLSPSLNSRPSPIS. Phosphoserine is present on residues S365 and S373. Position 378 is a phosphothreonine (T378). Positions 416-426 are enriched in polar residues; sequence QRQTPSGSREG. S552 is subject to Phosphoserine. Residues 570–595 show a composition bias toward low complexity; that stretch reads GPSASAALSPPLGSSPSSPGSQSLSS. The segment at 570 to 632 is disordered; the sequence is GPSASAALSP…HHPPQSLNVG (63 aa).

Component of some SCF complex, composed of CUL1, SKP1, RBX1 and FBXO42. Interacts (via the kelch domain) with p53/TP53; interaction is direct.

Its function is as follows. Substrate-recognition component of some SCF (SKP1-CUL1-F-box protein)-type E3 ubiquitin ligase complex. Specifically recognizes p53/TP53, promoting its ubiquitination and degradation. The chain is F-box only protein 42 (Fbxo42) from Mus musculus (Mouse).